The sequence spans 462 residues: Gamma-glutamylethanolamide synthetase GlnA4 (462 aa).

A GS beta-grasp domain is found at 30–126; that stretch reads GDIDTVVLAF…AVADLAWEDG (97 aa). The region spanning 133–462 is the GS catalytic domain; the sequence is PRQILRRQLE…WELRRSFERM (330 aa). Mg(2+) contacts are provided by E156 and E158. Residue E214 coordinates ATP. Mg(2+) contacts are provided by E219 and E226. G270 lines the L-glutamate pocket. A Mg(2+)-binding site is contributed by H274. 276 to 278 contacts ATP; that stretch reads HLS. The L-glutamate site is built by R325 and R343. Positions 343 and 348 each coordinate ATP. A Mg(2+)-binding site is contributed by E359. R361 provides a ligand contact to L-glutamate.

This sequence belongs to the glutamine synthetase family. Mg(2+) is required as a cofactor.

It carries out the reaction ethanolamine + L-glutamate + ATP = gamma-L-glutamylethanolamide + ADP + phosphate + H(+). It functions in the pathway amine and polyamine degradation; ethanolamine degradation. Very slightly decreased activity with glutamine synthetase (GS) inhibitor methionine sulfoximine (MSO). In terms of biological role, involved in the catabolism of monoamine ethanolamine. Catalyzes the ATP-dependent gamma-glutamylation of ethanolamine. No activity with polyamines. No complementation of the L-glutamine auxotrophy of an E.coli glnA mutant. Enables survival of S.coelicolor under high local environmental ethanolamine conditions. May play a role during starvation conditions to limit intracellular ethanolamine concentration, which in excess is toxic to the cells. This chain is Gamma-glutamylethanolamide synthetase GlnA4, found in Streptomyces coelicolor (strain ATCC BAA-471 / A3(2) / M145).